We begin with the raw amino-acid sequence, 373 residues long: D-alanine--D-alanine ligase (373 aa).

The ATP-grasp domain occupies 156-363 (KKLLAAEGLP…YPTLLAAMVD (208 aa)). 184–239 (RERLGLPVFVKPARGGSSIGVSRVTAWDELPAAVALARRHDPKVIVEAAVIGRELE) lines the ATP pocket. Aspartate 318, glutamate 330, and asparagine 332 together coordinate Mg(2+).

The protein belongs to the D-alanine--D-alanine ligase family. Requires Mg(2+) as cofactor. Mn(2+) is required as a cofactor.

It localises to the cytoplasm. It catalyses the reaction 2 D-alanine + ATP = D-alanyl-D-alanine + ADP + phosphate + H(+). Its pathway is cell wall biogenesis; peptidoglycan biosynthesis. Functionally, cell wall formation. This Mycolicibacterium smegmatis (strain ATCC 700084 / mc(2)155) (Mycobacterium smegmatis) protein is D-alanine--D-alanine ligase.